The sequence spans 105 residues: uncharacterized protein (105 aa).

This is an uncharacterized protein from Saccharolobus islandicus (Sulfolobus islandicus).